We begin with the raw amino-acid sequence, 41 residues long: Photosystem I reaction center subunit IX (41 aa).

A helical membrane pass occupies residues 7-27 (YLSTAPVLATVWMIITAGILI).

Belongs to the PsaJ family.

The protein resides in the cellular thylakoid membrane. May help in the organization of the PsaE and PsaF subunits. This is Photosystem I reaction center subunit IX from Trichodesmium erythraeum (strain IMS101).